Consider the following 121-residue polypeptide: uncharacterized protein (121 aa).

Over residues 12 to 24 the composition is skewed to low complexity; the sequence is EEGGASAAAPDAS. Disordered stretches follow at residues 12–63 and 101–121; these read EEGG…RLEP and KKLA…SPVV. Residues 26 to 35 show a composition bias toward basic residues; the sequence is KSKKGARPCF. Polar residues predominate over residues 40 to 49; that stretch reads QAGSCMTGRQ. Basic and acidic residues predominate over residues 112–121; it reads GSQKERSPVV.

This is an uncharacterized protein from Homo sapiens (Human).